Here is a 301-residue protein sequence, read N- to C-terminus: Troponin T, cardiac muscle (301 aa).

The segment covering 1-72 (MSDAEEVVEE…EAKDAEEGPV (72 aa)) has biased composition (acidic residues). 2 disordered regions span residues 1 to 97 (MSDA…DGER) and 125 to 224 (NRKK…KKKI). Residue serine 2 is modified to N-acetylserine. Serine 2 is modified (phosphoserine; by CK2). Composition is skewed to basic and acidic residues over residues 125–186 (NRKK…DEAR) and 206–224 (QTERKSGKRQTEREKKKKI). Threonine 207 carries the post-translational modification Phosphothreonine; by PKC/PRKCA. Position 211 is a phosphoserine; by PKC/PRKCA (serine 211). Position 216 is a phosphothreonine; by PKC/PRKCA and RAF1 (threonine 216). At threonine 297 the chain carries Phosphothreonine; by PKC/PRKCA.

This sequence belongs to the troponin T family. Post-translationally, phosphorylation at Thr-216 by PRKCA induces significant reduction in myofilament calcium sensitivity and actomyosin ATPase activity.

Its function is as follows. Troponin T is the tropomyosin-binding subunit of troponin, the thin filament regulatory complex which confers calcium-sensitivity to striated muscle actomyosin ATPase activity. The polypeptide is Troponin T, cardiac muscle (Tnnt2) (Mus musculus (Mouse)).